Consider the following 223-residue polypeptide: DNA mismatch repair protein MutH (223 aa).

The protein belongs to the MutH family.

It is found in the cytoplasm. Sequence-specific endonuclease that cleaves unmethylated GATC sequences. It is involved in DNA mismatch repair. The polypeptide is DNA mismatch repair protein MutH (Haemophilus influenzae (strain PittGG)).